Here is a 160-residue protein sequence, read N- to C-terminus: Cytochrome b6-f complex subunit 4 (160 aa).

Helical transmembrane passes span leucine 36 to valine 56, leucine 95 to glutamate 115, and threonine 131 to isoleucine 151.

It belongs to the cytochrome b family. PetD subfamily. In terms of assembly, the 4 large subunits of the cytochrome b6-f complex are cytochrome b6, subunit IV (17 kDa polypeptide, petD), cytochrome f and the Rieske protein, while the 4 small subunits are petG, petL, petM and petN. The complex functions as a dimer.

The protein localises to the plastid. It localises to the chloroplast thylakoid membrane. Component of the cytochrome b6-f complex, which mediates electron transfer between photosystem II (PSII) and photosystem I (PSI), cyclic electron flow around PSI, and state transitions. This is Cytochrome b6-f complex subunit 4 from Huperzia lucidula (Shining clubmoss).